A 150-amino-acid polypeptide reads, in one-letter code: UPF0336 protein SGR_2883 (150 aa).

One can recognise a MaoC-like domain in the interval 10–116 (RTYPPTPAYE…STIEAVKSLA (107 aa)).

Belongs to the UPF0336 family.

The chain is UPF0336 protein SGR_2883 from Streptomyces griseus subsp. griseus (strain JCM 4626 / CBS 651.72 / NBRC 13350 / KCC S-0626 / ISP 5235).